A 430-amino-acid chain; its full sequence is 3-phosphoshikimate 1-carboxyvinyltransferase (430 aa).

The 3-phosphoshikimate site is built by K21, S22, and R26. K21 lines the phosphoenolpyruvate pocket. Positions 94 and 122 each coordinate phosphoenolpyruvate. Residues S168, Q170, D315, and K342 each coordinate 3-phosphoshikimate. Phosphoenolpyruvate is bound at residue Q170. Residue D315 is the Proton acceptor of the active site. 2 residues coordinate phosphoenolpyruvate: R346 and R389.

This sequence belongs to the EPSP synthase family. As to quaternary structure, monomer.

It localises to the cytoplasm. It carries out the reaction 3-phosphoshikimate + phosphoenolpyruvate = 5-O-(1-carboxyvinyl)-3-phosphoshikimate + phosphate. It participates in metabolic intermediate biosynthesis; chorismate biosynthesis; chorismate from D-erythrose 4-phosphate and phosphoenolpyruvate: step 6/7. Its function is as follows. Catalyzes the transfer of the enolpyruvyl moiety of phosphoenolpyruvate (PEP) to the 5-hydroxyl of shikimate-3-phosphate (S3P) to produce enolpyruvyl shikimate-3-phosphate and inorganic phosphate. This Salinibacter ruber (strain DSM 13855 / M31) protein is 3-phosphoshikimate 1-carboxyvinyltransferase.